The primary structure comprises 282 residues: Ribosomal RNA small subunit methyltransferase A (282 aa).

The S-adenosyl-L-methionine site is built by Asn28, Leu30, Gly55, Glu77, Asp103, and Asn122.

The protein belongs to the class I-like SAM-binding methyltransferase superfamily. rRNA adenine N(6)-methyltransferase family. RsmA subfamily.

The protein resides in the cytoplasm. The catalysed reaction is adenosine(1518)/adenosine(1519) in 16S rRNA + 4 S-adenosyl-L-methionine = N(6)-dimethyladenosine(1518)/N(6)-dimethyladenosine(1519) in 16S rRNA + 4 S-adenosyl-L-homocysteine + 4 H(+). Functionally, specifically dimethylates two adjacent adenosines (A1518 and A1519) in the loop of a conserved hairpin near the 3'-end of 16S rRNA in the 30S particle. May play a critical role in biogenesis of 30S subunits. This chain is Ribosomal RNA small subunit methyltransferase A, found in Paracoccus denitrificans (strain Pd 1222).